The chain runs to 142 residues: Galectin-16 (142 aa).

Positions 6-138 (VPYKLPVSLS…DVSLDSVLVN (133 aa)) constitute a Galectin domain.

As to expression, predominantly and highly expressed in the placenta where it is localized mainly in the syncytiotrophoblast and in the endothelia of fetal vessels. Also detected in the amnion and chorionic trophoblasts in fetal membranes.

Functionally, binds lactose with high affinity. Strong inducer of T-cell apoptosis. The polypeptide is Galectin-16 (Homo sapiens (Human)).